Consider the following 173-residue polypeptide: Alpha-crystallin A chain (173 aa).

An N-acetylmethionine modification is found at Met1. A required for complex formation with BFSP1 and BFSP2 region spans residues 1 to 63 (MDVTIQHPWF…RTVLDSGVSE (63 aa)). The residue at position 6 (Gln6) is a Deamidated glutamine; partial. Position 45 is a phosphoserine (Ser45). Deamidated glutamine; partial is present on Gln50. Positions 52–162 (LFRTVLDSGV…GHSERAIPVS (111 aa)) constitute a sHSP domain. An N6-acetyllysine modification is found at Lys70. Gln90 bears the Deamidated glutamine; partial mark. Lys99 bears the N6-acetyllysine mark. Residue His100 coordinates Zn(2+). The residue at position 101 (Asn101) is a Deamidated asparagine; partial. Zn(2+) contacts are provided by Glu102 and His107. Phosphoserine is present on Ser122. Residue Asn123 is modified to Deamidated asparagine; partial. The tract at residues 144-173 (PKVQSGLDAGHSERAIPVSREEKPSSAPSS) is disordered. Residue Gln147 is modified to Deamidated glutamine; partial. A compositionally biased stretch (basic and acidic residues) spans 153–167 (GHSERAIPVSREEKP). His154 contacts Zn(2+). Ser162 is a glycosylation site (O-linked (GlcNAc) serine).

The protein belongs to the small heat shock protein (HSP20) family. As to quaternary structure, heteromer composed of three CRYAA and one CRYAB subunits. Inter-subunit bridging via zinc ions enhances stability, which is crucial as there is no protein turn over in the lens. Can also form homodimers and homotetramers (dimers of dimers) which serve as the building blocks of homooligomers. Within homooligomers, the zinc-binding motif is created from residues of 3 different molecules. His-100 and Glu-102 from one molecule are ligands of the zinc ion, and His-107 and His-154 residues from additional molecules complete the site with tetrahedral coordination geometry. Part of a complex required for lens intermediate filament formation composed of BFSP1, BFSP2 and CRYAA. Post-translationally, acetylation at Lys-70 may increase chaperone activity. In terms of processing, undergoes age-dependent proteolytical cleavage at the C-terminus.

The protein resides in the cytoplasm. It localises to the nucleus. In terms of biological role, contributes to the transparency and refractive index of the lens. Acts as a chaperone, preventing aggregation of various proteins under a wide range of stress conditions. Required for the correct formation of lens intermediate filaments as part of a complex composed of BFSP1, BFSP2 and CRYAA. The polypeptide is Alpha-crystallin A chain (CRYAA) (Otolemur crassicaudatus (Brown greater galago)).